The following is a 138-amino-acid chain: Small ribosomal subunit protein uS12 (138 aa).

The residue at position 89 (Asp89) is a 3-methylthioaspartic acid. The interval 107 to 138 (VSGRMQRRSKYGAKFPKTGTGKTKAVPTKNKK) is disordered.

It belongs to the universal ribosomal protein uS12 family. As to quaternary structure, part of the 30S ribosomal subunit. Contacts proteins S8 and S17. May interact with IF1 in the 30S initiation complex.

Functionally, with S4 and S5 plays an important role in translational accuracy. Interacts with and stabilizes bases of the 16S rRNA that are involved in tRNA selection in the A site and with the mRNA backbone. Located at the interface of the 30S and 50S subunits, it traverses the body of the 30S subunit contacting proteins on the other side and probably holding the rRNA structure together. The combined cluster of proteins S8, S12 and S17 appears to hold together the shoulder and platform of the 30S subunit. This is Small ribosomal subunit protein uS12 from Azobacteroides pseudotrichonymphae genomovar. CFP2.